The sequence spans 298 residues: Cobalt-precorrin-5B C(1)-methyltransferase (298 aa).

This sequence belongs to the CbiD family.

It carries out the reaction Co-precorrin-5B + S-adenosyl-L-methionine = Co-precorrin-6A + S-adenosyl-L-homocysteine. It participates in cofactor biosynthesis; adenosylcobalamin biosynthesis; cob(II)yrinate a,c-diamide from sirohydrochlorin (anaerobic route): step 6/10. In terms of biological role, catalyzes the methylation of C-1 in cobalt-precorrin-5B to form cobalt-precorrin-6A. This Archaeoglobus fulgidus (strain ATCC 49558 / DSM 4304 / JCM 9628 / NBRC 100126 / VC-16) protein is Cobalt-precorrin-5B C(1)-methyltransferase.